A 967-amino-acid chain; its full sequence is Phosphoenolpyruvate carboxylase (967 aa).

Ser11 carries the post-translational modification Phosphoserine. Active-site residues include His172 and Lys601.

This sequence belongs to the PEPCase type 1 family. In terms of assembly, homotetramer. Mg(2+) is required as a cofactor.

Its subcellular location is the cytoplasm. It catalyses the reaction oxaloacetate + phosphate = phosphoenolpyruvate + hydrogencarbonate. It participates in photosynthesis; C3 acid pathway. With respect to regulation, by light-reversible phosphorylation. In terms of biological role, through the carboxylation of phosphoenolpyruvate (PEP) it forms oxaloacetate, a four-carbon dicarboxylic acid source for the tricarboxylic acid cycle. The sequence is that of Phosphoenolpyruvate carboxylase (PPCA1) from Flaveria pringlei.